Here is a 527-residue protein sequence, read N- to C-terminus: UvrABC system protein C (527 aa).

One can recognise a GIY-YIG domain in the interval 9–87 (KNPGCYIYKN…IKKYSPKYNI (79 aa)). The UVR domain occupies 191 to 226 (DSLIHELKNEMNEKSKNLQFEEALLIREEINAIERL).

The protein belongs to the UvrC family. As to quaternary structure, interacts with UvrB in an incision complex.

The protein resides in the cytoplasm. Its function is as follows. The UvrABC repair system catalyzes the recognition and processing of DNA lesions. UvrC both incises the 5' and 3' sides of the lesion. The N-terminal half is responsible for the 3' incision and the C-terminal half is responsible for the 5' incision. The protein is UvrABC system protein C of Methanococcus maripaludis (strain DSM 14266 / JCM 13030 / NBRC 101832 / S2 / LL).